A 131-amino-acid polypeptide reads, in one-letter code: Antileukoproteinase (131 aa).

The signal sequence occupies residues 1–25 (MKSCGLLPFTVLLALGILAPWTVEG). WAP domains lie at 29-77 (DAIK…VNPV) and 83-131 (VWRK…LPPM). Intrachain disulfides connect cysteine 36–cysteine 65, cysteine 44–cysteine 69, cysteine 52–cysteine 64, cysteine 58–cysteine 73, cysteine 90–cysteine 119, cysteine 97–cysteine 123, cysteine 106–cysteine 118, and cysteine 112–cysteine 127. The elastase inhibitory domain stretch occupies residues 85 to 131 (RKPGRCVKTQARCMMLNPPNVCQRDGQCDGKYKCCEGICGKVCLPPM).

As to quaternary structure, interacts with GRN; interaction protects progranulin from proteolysis. As to expression, detected in bronchial epithelial cells. Detected in bronchoalveolar fluid after infection with M.tuberculosis (at protein level). Highest expression in lung, spleen, intestine and epididymis with lower levels in liver and seminal vesicle. No expression in brain, heart, kidney and muscle.

It is found in the secreted. Its function is as follows. Acid-stable proteinase inhibitor with strong affinities for trypsin, chymotrypsin, elastase, and cathepsin G. Modulates the innate immune response after bacterial infection. Contributes to regulate the inflammatory and immune responses to the intracellular parasite L.major. Down-regulates responses to bacterial lipopolysaccharide (LPS). Plays a role in regulating the activation of NF-kappa-B and inflammatory responses. Has antimicrobial activity against mycobacteria, but not against salmonella. Contributes to normal resistance against infection by M.tuberculosis. Required for normal resistance to L.major. Required for normal wound healing, probably by preventing tissue damage by limiting protease activity. Together with ELANE, required for normal differentiation and proliferation of bone marrow myeloid cells. In Mus musculus (Mouse), this protein is Antileukoproteinase (Slpi).